A 692-amino-acid polypeptide reads, in one-letter code: Elongation factor G (692 aa).

Positions 8–282 (KDYRNIGIMA…AVVDYLPSPL (275 aa)) constitute a tr-type G domain. Residues 17-24 (AHIDAGKT), 81-85 (DTPGH), and 135-138 (NKMD) each bind GTP.

Belongs to the TRAFAC class translation factor GTPase superfamily. Classic translation factor GTPase family. EF-G/EF-2 subfamily.

Its subcellular location is the cytoplasm. In terms of biological role, catalyzes the GTP-dependent ribosomal translocation step during translation elongation. During this step, the ribosome changes from the pre-translocational (PRE) to the post-translocational (POST) state as the newly formed A-site-bound peptidyl-tRNA and P-site-bound deacylated tRNA move to the P and E sites, respectively. Catalyzes the coordinated movement of the two tRNA molecules, the mRNA and conformational changes in the ribosome. The protein is Elongation factor G (fusA) of Mycoplasmopsis pulmonis (strain UAB CTIP) (Mycoplasma pulmonis).